Reading from the N-terminus, the 80-residue chain is Trefoil factor 3 (80 aa).

The first 21 residues, 1–21, serve as a signal peptide directing secretion; that stretch reads MEARMFWLLVVLLALASSSSA. Positions 30-73 constitute a P-type domain; sequence NQCAVPAKDRVDCGYPQVTPEQCNNRGCCFDSSIXGVPWCFKPL. Cystine bridges form between Cys32–Cys58, Cys42–Cys57, and Cys52–Cys69.

Monomer. Homodimer; disulfide-linked.

The protein localises to the secreted. The protein resides in the extracellular space. It localises to the extracellular matrix. It is found in the cytoplasm. Involved in the maintenance and repair of the intestinal mucosa. Promotes the mobility of epithelial cells in healing processes (motogen). The sequence is that of Trefoil factor 3 (TFF3) from Sus scrofa (Pig).